The sequence spans 325 residues: Melanocortin receptor 5 (325 aa).

Residues 1–37 (MNSSSTLTVLNLTLNASEDGILGSNVKNKSLACEEMG) are Extracellular-facing. N-linked (GlcNAc...) asparagine glycosylation is found at Asn2, Asn11, Asn15, and Asn28. A helical transmembrane segment spans residues 38-61 (IAVEVFLTLGLVSLLENILVIGAI). Topologically, residues 62-73 (VKNKNLHSPMYF) are cytoplasmic. The chain crosses the membrane as a helical span at residues 74–97 (FVGSLAVADMLVSMSNAWETVTIY). The Extracellular portion of the chain corresponds to 98–114 (LLNNKHLVIADTFVRHI). Residues 115–138 (DNVFDSMICISVVASMCSLLAIAV) form a helical membrane-spanning segment. Over 139–155 (DRYITIFYALRYHHIMT) the chain is Cytoplasmic. The chain crosses the membrane as a helical span at residues 156–179 (ARRSGVIIACIWTFCISCGIVFII). Residues 180–186 (YYESKYV) are Extracellular-facing. A helical transmembrane segment spans residues 187-211 (IICLISMFFTMLFFMVSLYIHMFLL). Over 212–239 (ARNHVKRIAASPRYNSVRQRTSMKGAIT) the chain is Cytoplasmic. A helical transmembrane segment spans residues 240–265 (LTMLLGIFIVCWSPFFLHLILMISCP). The Extracellular segment spans residues 266–273 (QNVYCSCF). The helical transmembrane segment at 274 to 297 (MSYFNMYLILIMCNSVIDPLIYAL) threads the bilayer. Over 298–325 (RSQEMRRTFKEIVCCHGFRRPCRLLGGY) the chain is Cytoplasmic. S-palmitoyl cysteine attachment occurs at residues Cys311 and Cys312.

This sequence belongs to the G-protein coupled receptor 1 family. As to expression, skin, adrenal gland, skeletal muscle, bone marrow, spleen, thymus, gonads, uterus and brain.

It is found in the cell membrane. In terms of biological role, receptor for MSH (alpha, beta and gamma) and ACTH. The activity of this receptor is mediated by G proteins which activate adenylate cyclase. This receptor is a possible mediator of the immunomodulation properties of melanocortins. The polypeptide is Melanocortin receptor 5 (Mc5r) (Mus musculus (Mouse)).